The sequence spans 265 residues: Neuronal membrane glycoprotein M6-b (265 aa).

Residues 31 to 51 (GGVPYASLVATILCFSGVALF) form a helical membrane-spanning segment. N-linked (GlcNAc...) asparagine glycosylation occurs at asparagine 73. Helical transmembrane passes span 90-110 (VIYG…AEGF) and 136-156 (FVFL…FSAV). Asparagine 177 carries an N-linked (GlcNAc...) asparagine glycan. The helical transmembrane segment at 224-244 (LFIVACAGAGATVIALLIYMM) threads the bilayer. A Phosphoserine modification is found at serine 257.

This sequence belongs to the myelin proteolipid protein family. As to quaternary structure, interacts with SERT.

Its subcellular location is the membrane. It is found in the cell membrane. Its function is as follows. May be involved in neural development. Involved in regulation of osteoblast function and bone formation. Involved in matrix vesicle release by osteoblasts; this function seems to involve maintenance of the actin cytoskeleton. May be involved in cellular trafficking of SERT and thereby in regulation of serotonin uptake. The polypeptide is Neuronal membrane glycoprotein M6-b (GPM6B) (Pongo abelii (Sumatran orangutan)).